We begin with the raw amino-acid sequence, 127 residues long: Large ribosomal subunit protein bL17 (127 aa).

Belongs to the bacterial ribosomal protein bL17 family. Part of the 50S ribosomal subunit. Contacts protein L32.

This is Large ribosomal subunit protein bL17 from Xanthomonas euvesicatoria pv. vesicatoria (strain 85-10) (Xanthomonas campestris pv. vesicatoria).